The sequence spans 266 residues: Glucosamine-6-phosphate deaminase (266 aa).

D72 serves as the catalytic Proton acceptor; for enolization step. The For ring-opening step role is filled by D141. H143 (proton acceptor; for ring-opening step) is an active-site residue. The active-site For ring-opening step is the E148.

Belongs to the glucosamine/galactosamine-6-phosphate isomerase family. NagB subfamily. In terms of assembly, homohexamer.

The catalysed reaction is alpha-D-glucosamine 6-phosphate + H2O = beta-D-fructose 6-phosphate + NH4(+). It functions in the pathway amino-sugar metabolism; N-acetylneuraminate degradation; D-fructose 6-phosphate from N-acetylneuraminate: step 5/5. Its activity is regulated as follows. Allosterically activated by N-acetylglucosamine 6-phosphate (GlcNAc6P). Functionally, catalyzes the reversible isomerization-deamination of glucosamine 6-phosphate (GlcN6P) to form fructose 6-phosphate (Fru6P) and ammonium ion. The sequence is that of Glucosamine-6-phosphate deaminase from Pectobacterium carotovorum subsp. carotovorum (strain PC1).